Reading from the N-terminus, the 190-residue chain is Major intrinsically disordered NOTCH2-binding receptor 1-like (190 aa).

Serine 79 is subject to Phosphoserine. Residues asparagine 109 and asparagine 125 are each glycosylated (N-linked (GlcNAc...) asparagine). A helical membrane pass occupies residues 169-189 (GLILLVVISILVTIVTIITFF).

The protein belongs to the MINAR family. Interacts with NOTCH2. As to expression, highly expressed in the auditory hair cells.

It localises to the lysosome membrane. The protein resides in the endoplasmic reticulum membrane. Binds cholesterol and may regulate the distribution and homeostasis of cholesterol in hair cells. May play a role in angiogenesis. This Homo sapiens (Human) protein is Major intrinsically disordered NOTCH2-binding receptor 1-like.